Consider the following 295-residue polypeptide: MDNSGKQAEAMALLAEAERKVKNSQSFFSGLFGGSSKIEEACEIYARAANMFKMAKNWSAAGNAFCQAAQLHLQLQSKHDAATCFVDAGNAFKKADPQEAINCLMRAIEIYTDMGRFTIAAKHHISIAEIYETELVDVEKAIAHYEQSADYYKGEESNSSANKCLLKVAGYAAQLEQYQKAIDIYEQVGTSAMDSPLLKYSAKDYFFKAALCHFCIDMLNAKLAVQKYEELFPAFSDSRECKLMKKLLEAHEEQNVDSYTEAVKEYDSISRLDQWLTTMLLRIKKTIQGDEEDLR.

Met-1 is subject to N-acetylmethionine. A phosphoserine mark is found at Ser-26, Ser-29, and Ser-195.

This sequence belongs to the SNAP family. As to quaternary structure, interacts with PRKCABP, and disrupts the interaction between GRIA2 and PRKCABP, leading to the internalization of GRIA2. Found in a complex with VAMP8. Component of a SNARE-like complex that contains at least ZW10, USE1L, RINT1, STX18 and NAPA/SNAP-alpha. Interacts with VTI1A. Interacts with STX12. Interacts with GNA12 (via N-terminus); the interaction promotes CDH5 localization to plasma membrane.

The protein resides in the cell membrane. Functionally, required for vesicular transport between the endoplasmic reticulum and the Golgi apparatus. Together with GNA12 promotes CDH5 localization to plasma membrane. The sequence is that of Alpha-soluble NSF attachment protein (Napa) from Mus musculus (Mouse).